The chain runs to 625 residues: tRNA uridine 5-carboxymethylaminomethyl modification enzyme MnmG (625 aa).

FAD is bound by residues 9–14 (GGGHAG), Val-121, and Ser-177. Position 271 to 285 (271 to 285 (GPRYCPSIEDKVNRF)) interacts with NAD(+). Gln-368 is a binding site for FAD.

It belongs to the MnmG family. Homodimer. Heterotetramer of two MnmE and two MnmG subunits. It depends on FAD as a cofactor.

The protein localises to the cytoplasm. In terms of biological role, NAD-binding protein involved in the addition of a carboxymethylaminomethyl (cmnm) group at the wobble position (U34) of certain tRNAs, forming tRNA-cmnm(5)s(2)U34. The chain is tRNA uridine 5-carboxymethylaminomethyl modification enzyme MnmG from Aliarcobacter butzleri (strain RM4018) (Arcobacter butzleri).